The primary structure comprises 269 residues: 1-(5-phosphoribosyl)-5-[(5-phosphoribosylamino)methylideneamino] imidazole-4-carboxamide isomerase (269 aa).

The Proton acceptor role is filled by D10. D132 (proton donor) is an active-site residue.

The protein belongs to the HisA/HisF family.

It localises to the cytoplasm. It carries out the reaction 1-(5-phospho-beta-D-ribosyl)-5-[(5-phospho-beta-D-ribosylamino)methylideneamino]imidazole-4-carboxamide = 5-[(5-phospho-1-deoxy-D-ribulos-1-ylimino)methylamino]-1-(5-phospho-beta-D-ribosyl)imidazole-4-carboxamide. The protein operates within amino-acid biosynthesis; L-histidine biosynthesis; L-histidine from 5-phospho-alpha-D-ribose 1-diphosphate: step 4/9. The protein is 1-(5-phosphoribosyl)-5-[(5-phosphoribosylamino)methylideneamino] imidazole-4-carboxamide isomerase of Xylella fastidiosa (strain M12).